We begin with the raw amino-acid sequence, 22 residues long: Zinc finger protein 326 (22 aa).

The segment at 1–22 (QGYGFNEPEQTRNQGGSSWEAP) is disordered. Residues 11 to 22 (TRNQGGSSWEAP) show a composition bias toward polar residues.

Belongs to the AKAP95 family.

The protein localises to the nucleus matrix. Functionally, probable transcriptional activator which may play a role in neuronal differentiation. Able to bind DNA and activate expression in vitro. The polypeptide is Zinc finger protein 326 (Znf326) (Rattus norvegicus (Rat)).